The chain runs to 564 residues: Formate--tetrahydrofolate ligase (564 aa).

69–76 (TPAGEGKS) provides a ligand contact to ATP.

This sequence belongs to the formate--tetrahydrofolate ligase family.

The enzyme catalyses (6S)-5,6,7,8-tetrahydrofolate + formate + ATP = (6R)-10-formyltetrahydrofolate + ADP + phosphate. It participates in one-carbon metabolism; tetrahydrofolate interconversion. The protein is Formate--tetrahydrofolate ligase of Renibacterium salmoninarum (strain ATCC 33209 / DSM 20767 / JCM 11484 / NBRC 15589 / NCIMB 2235).